The chain runs to 327 residues: Interleukin-12 subunit beta (327 aa).

The first 22 residues, methionine 1–alanine 22, serve as a signal peptide directing secretion. The Ig-like C2-type domain occupies isoleucine 23–lysine 106. The cysteines at positions 50 and 90 are disulfide-linked. An N-linked (GlcNAc...) asparagine glycan is attached at asparagine 223. Positions proline 238–serine 327 constitute a Fibronectin type-III domain.

Belongs to the IL-12B family. Heterodimer with IL12A; disulfide-linked. The heterodimer is known as interleukin IL-12. Heterodimer with IL23A; disulfide-linked. The heterodimer is known as interleukin IL-23. Also secreted as a monomer. Interacts with NBR1; this interaction promotes IL-12 secretion.

Its subcellular location is the secreted. In terms of biological role, cytokine that can act as a growth factor for activated T and NK cells, enhance the lytic activity of NK/lymphokine-activated killer cells, and stimulate the production of IFN-gamma by resting PBMC. This is Interleukin-12 subunit beta (IL12B) from Bubalus carabanensis (Swamp type water buffalo).